Reading from the N-terminus, the 183-residue chain is Small ribosomal subunit protein uS4c (183 aa).

Residues 82–143 (MRLDNILFRL…KQRSKALIQN (62 aa)) enclose the S4 RNA-binding domain.

It belongs to the universal ribosomal protein uS4 family. In terms of assembly, part of the 30S ribosomal subunit. Contacts protein S5. The interaction surface between S4 and S5 is involved in control of translational fidelity.

The protein resides in the plastid. It is found in the chloroplast. Its function is as follows. One of the primary rRNA binding proteins, it binds directly to 16S rRNA where it nucleates assembly of the body of the 30S subunit. Functionally, with S5 and S12 plays an important role in translational accuracy. The chain is Small ribosomal subunit protein uS4c (rps4) from Freesia sp. (strain Lejeune 1997).